A 350-amino-acid polypeptide reads, in one-letter code: Histidinol-phosphate aminotransferase (350 aa).

The residue at position 220 (lysine 220) is an N6-(pyridoxal phosphate)lysine.

Belongs to the class-II pyridoxal-phosphate-dependent aminotransferase family. Histidinol-phosphate aminotransferase subfamily. Homodimer. Pyridoxal 5'-phosphate is required as a cofactor.

It catalyses the reaction L-histidinol phosphate + 2-oxoglutarate = 3-(imidazol-4-yl)-2-oxopropyl phosphate + L-glutamate. Its pathway is amino-acid biosynthesis; L-histidine biosynthesis; L-histidine from 5-phospho-alpha-D-ribose 1-diphosphate: step 7/9. In Macrococcus caseolyticus (strain JCSC5402) (Macrococcoides caseolyticum), this protein is Histidinol-phosphate aminotransferase.